The following is a 209-amino-acid chain: Small ribosomal subunit protein uS3 (209 aa).

The region spanning 38–107 (IRKVIKSKYA…RFIVNVEEIK (70 aa)) is the KH type-2 domain.

Belongs to the universal ribosomal protein uS3 family. Part of the 30S ribosomal subunit. Forms a tight complex with proteins S10 and S14.

Functionally, binds the lower part of the 30S subunit head. Binds mRNA in the 70S ribosome, positioning it for translation. This Thermosipho melanesiensis (strain DSM 12029 / CIP 104789 / BI429) protein is Small ribosomal subunit protein uS3.